The chain runs to 360 residues: Aurora kinase B (360 aa).

The Protein kinase domain maps to Phe93 to Val343. Residues Leu99 to Val107 and Lys122 each bind ATP. Asp216 functions as the Proton acceptor in the catalytic mechanism.

The protein belongs to the protein kinase superfamily. Ser/Thr protein kinase family. Aurora subfamily. In terms of assembly, component of the chromosomal passenger complex (CPC).

It is found in the nucleus. The protein localises to the chromosome. It localises to the centromere. The protein resides in the cytoplasm. Its subcellular location is the cytoskeleton. It is found in the spindle. The protein localises to the midbody. It catalyses the reaction L-seryl-[protein] + ATP = O-phospho-L-seryl-[protein] + ADP + H(+). The enzyme catalyses L-threonyl-[protein] + ATP = O-phospho-L-threonyl-[protein] + ADP + H(+). With respect to regulation, kinase activity is stimulated by cell-cycle specific phosphorylation. Functionally, serine/threonine-protein kinase component of the chromosomal passenger complex (CPC), a complex that acts as a key regulator of mitosis. The CPC complex has essential functions at the centromere in ensuring correct chromosome alignment and segregation and is required for chromatin-induced microtubule stabilization and spindle assembly. Involved in the bipolar attachment of spindle microtubules to kinetochores and is a key regulator for the onset of cytokinesis during mitosis. Required for central/midzone spindle assembly and cleavage furrow formation. Key component of the cytokinesis checkpoint, a process required to delay abscission to prevent both premature resolution of intercellular chromosome bridges and accumulation of DNA damage. Phosphorylates 'Ser-10' of histone H3 during mitosis. The chain is Aurora kinase B from Xenopus tropicalis (Western clawed frog).